The chain runs to 67 residues: Medusin-PT (67 aa).

An N-terminal signal peptide occupies residues 1-22 (MAFLKKSLFLVFFLGFVSLSIC). Positions 23–48 (EEEKRETDEKENEQEDDREERSEEKR) are excised as a propeptide. The segment at 25 to 46 (EKRETDEKENEQEDDREERSEE) is disordered. The span at 31–40 (EKENEQEDDR) shows a compositional bias: acidic residues. Leu66 carries the post-translational modification Leucine amide.

It belongs to the frog skin active peptide (FSAP) family. Medusin subfamily. Post-translationally, in the synthetic mutant medusin-PT1a [T58K], the Leu-50 has been modified in a D-amino acid. In medusin-PT1a, there is an increase in antimicrobial activity, and an increase in hemolytic activity. It is more potent against S.aureus and gains activity against MRSA, E.faecalis, E.coli, P.aeruginosa and C.albicans. There is an important increase in both biofilm inhibition and biofilm eradication. In terms of tissue distribution, expressed by the skin glands.

Its subcellular location is the secreted. It is found in the target cell membrane. Its function is as follows. Antimicrobial peptide with activity against Gram-positive bacteria S.epidermidis ATCC 12228 (MIC=50 uM) and S.aureus (MIC=64 ug/ml and MBC=128 ug/ml). Not active against some Gram-positive bacteria (methicillin-resistant S.aureus (MRSA), E.faecalis), Gram-negative bacterium E.coli ATCC 25922 and fungus C.albicans at concentrations up to 100 uM. Can only slightly inhibit the formation of biofilm by S.aureus (minimal biofilm inhibitionconcentration MBIC=512 ug/ml, minimal biofilm eradication concentration MBEC&gt;512 ug/ml). Has an anti-inflammatory effect, since it inhibits the production of the pro-inflammatory cytokines TNF-alpha and IL-1beta. Has high activity of stimulation of insulin release, which may protect the species from being eaten by predators by causing fatal hypoglycemia. Is not cytotoxic to cancer line cells. Shows very low hemolysis on horse erythrocytes and moderate hemolysis on mouse erythrocytes. In Phyllomedusa tarsius (Brownbelly leaf frog), this protein is Medusin-PT.